The primary structure comprises 142 residues: Large ribosomal subunit protein uL13 (142 aa).

The protein belongs to the universal ribosomal protein uL13 family. In terms of assembly, part of the 50S ribosomal subunit.

In terms of biological role, this protein is one of the early assembly proteins of the 50S ribosomal subunit, although it is not seen to bind rRNA by itself. It is important during the early stages of 50S assembly. The polypeptide is Large ribosomal subunit protein uL13 (Saccharophagus degradans (strain 2-40 / ATCC 43961 / DSM 17024)).